The chain runs to 355 residues: Ubiquinone biosynthesis protein COQ4 homolog, mitochondrial (355 aa).

Zn(2+) contacts are provided by histidine 134, aspartate 135, histidine 138, and glutamate 150.

This sequence belongs to the COQ4 family. In terms of assembly, component of a multi-subunit COQ enzyme complex. The cofactor is Zn(2+).

Its subcellular location is the mitochondrion inner membrane. The enzyme catalyses a 4-hydroxy-3-methoxy-5-(all-trans-polyprenyl)benzoate + H(+) = a 2-methoxy-6-(all-trans-polyprenyl)phenol + CO2. Its pathway is cofactor biosynthesis; ubiquinone biosynthesis. Functionally, lyase that catalyzes the C1-decarboxylation of 4-hydroxy-3-methoxy-5-(all-trans-polyprenyl)benzoic acid into 2-methoxy-6-(all-trans-polyprenyl)phenol during ubiquinone biosynthesis. The sequence is that of Ubiquinone biosynthesis protein COQ4 homolog, mitochondrial from Plasmodium knowlesi (strain H).